A 302-amino-acid chain; its full sequence is Sulfate adenylyltransferase subunit 2 (302 aa).

The protein belongs to the PAPS reductase family. CysD subfamily. As to quaternary structure, heterodimer composed of CysD, the smaller subunit, and CysN.

The enzyme catalyses sulfate + ATP + H(+) = adenosine 5'-phosphosulfate + diphosphate. It participates in sulfur metabolism; hydrogen sulfide biosynthesis; sulfite from sulfate: step 1/3. In terms of biological role, with CysN forms the ATP sulfurylase (ATPS) that catalyzes the adenylation of sulfate producing adenosine 5'-phosphosulfate (APS) and diphosphate, the first enzymatic step in sulfur assimilation pathway. APS synthesis involves the formation of a high-energy phosphoric-sulfuric acid anhydride bond driven by GTP hydrolysis by CysN coupled to ATP hydrolysis by CysD. This Serratia proteamaculans (strain 568) protein is Sulfate adenylyltransferase subunit 2.